Reading from the N-terminus, the 217-residue chain is U2 snRNP component ist3 (217 aa).

An RRM domain is found at A31–S109. Disordered stretches follow at residues P119–N138 and E154–G217. A compositionally biased stretch (polar residues) spans S128 to N138. Position 160 is a phosphoserine (S160). Basic and acidic residues-rich tracts occupy residues P161–H176 and H185–R198. A compositionally biased stretch (basic residues) spans H199–G217.

The protein belongs to the IST3 family. Belongs to the 40S cdc5-associated complex (or cwf complex), a spliceosome sub-complex reminiscent of a late-stage spliceosome composed of the U2, U5 and U6 snRNAs and at least brr2, cdc5, cwf2/prp3, cwf3/syf1, cwf4/syf3, cwf5/ecm2, spp42/cwf6, cwf7/spf27, cwf8, cwf9, cwf10, cwf11, cwf12, prp45/cwf13, cwf14, cwf15, cwf16, cwf17, cwf18, cwf19, cwf20, cwf21, cwf22, cwf23, cwf24, cwf25, cwf26, cyp7/cwf27, cwf28, cwf29/ist3, lea1, msl1, prp5/cwf1, prp10, prp12/sap130, prp17, prp22, sap61, sap62, sap114, sap145, slu7, smb1, smd1, smd3, smf1, smg1 and syf2.

The protein resides in the nucleus. Functionally, required for pre-mRNA splicing and spliceosome assembly. The protein is U2 snRNP component ist3 (cwf29) of Schizosaccharomyces pombe (strain 972 / ATCC 24843) (Fission yeast).